The following is a 157-amino-acid chain: uncharacterized protein (157 aa).

2 disordered regions span residues alanine 76–glycine 105 and valine 132–glycine 157. A compositionally biased stretch (low complexity) spans proline 135 to proline 148.

To M.pneumoniae MPN_091 and MPN_413.

This is an uncharacterized protein from Mycoplasma pneumoniae (strain ATCC 29342 / M129 / Subtype 1) (Mycoplasmoides pneumoniae).